The chain runs to 305 residues: Probable branched-chain-amino-acid aminotransferase (305 aa).

K156 carries the N6-(pyridoxal phosphate)lysine modification.

The protein belongs to the class-IV pyridoxal-phosphate-dependent aminotransferase family. Pyridoxal 5'-phosphate serves as cofactor.

The catalysed reaction is L-leucine + 2-oxoglutarate = 4-methyl-2-oxopentanoate + L-glutamate. It carries out the reaction L-isoleucine + 2-oxoglutarate = (S)-3-methyl-2-oxopentanoate + L-glutamate. It catalyses the reaction L-valine + 2-oxoglutarate = 3-methyl-2-oxobutanoate + L-glutamate. It functions in the pathway amino-acid biosynthesis; L-isoleucine biosynthesis; L-isoleucine from 2-oxobutanoate: step 4/4. Its pathway is amino-acid biosynthesis; L-leucine biosynthesis; L-leucine from 3-methyl-2-oxobutanoate: step 4/4. It participates in amino-acid biosynthesis; L-valine biosynthesis; L-valine from pyruvate: step 4/4. Acts on leucine, isoleucine and valine. This is Probable branched-chain-amino-acid aminotransferase (ilvE) from Synechocystis sp. (strain ATCC 27184 / PCC 6803 / Kazusa).